A 448-amino-acid chain; its full sequence is tRNA wybutosine-synthesizing protein 2 homolog (448 aa).

S-adenosyl-L-methionine contacts are provided by residues Ser-218, Lys-225, Glu-265, and 293–294 (DN).

This sequence belongs to the class I-like SAM-binding methyltransferase superfamily. TRM5/TYW2 family.

It catalyses the reaction 4-demethylwyosine(37) in tRNA(Phe) + S-adenosyl-L-methionine = 4-demethyl-7-[(3S)-3-amino-3-carboxypropyl]wyosine(37) in tRNA(Phe) + S-methyl-5'-thioadenosine + H(+). Its pathway is tRNA modification; wybutosine-tRNA(Phe) biosynthesis. S-adenosyl-L-methionine-dependent transferase that acts as a component of the wybutosine biosynthesis pathway. Wybutosine is a hyper modified guanosine with a tricyclic base found at the 3'-position adjacent to the anticodon of eukaryotic phenylalanine tRNA. Catalyzes the transfer of the alpha-amino-alpha-carboxypropyl (acp) group from S-adenosyl-L-methionine to the C-7 position of 4-demethylwyosine (imG-14) to produce wybutosine-86. This chain is tRNA wybutosine-synthesizing protein 2 homolog (TRMT12), found in Homo sapiens (Human).